A 184-amino-acid chain; its full sequence is ATP synthase subunit b, chloroplastic (184 aa).

Residues 4-24 (IINLVIFSGYWPIAGNFGLNT) traverse the membrane as a helical segment.

This sequence belongs to the ATPase B chain family. In terms of assembly, F-type ATPases have 2 components, F(1) - the catalytic core - and F(0) - the membrane proton channel. F(1) has five subunits: alpha(3), beta(3), gamma(1), delta(1), epsilon(1). F(0) has four main subunits: a(1), b(1), b'(1) and c(10-14). The alpha and beta chains form an alternating ring which encloses part of the gamma chain. F(1) is attached to F(0) by a central stalk formed by the gamma and epsilon chains, while a peripheral stalk is formed by the delta, b and b' chains.

It is found in the plastid. Its subcellular location is the chloroplast thylakoid membrane. F(1)F(0) ATP synthase produces ATP from ADP in the presence of a proton or sodium gradient. F-type ATPases consist of two structural domains, F(1) containing the extramembraneous catalytic core and F(0) containing the membrane proton channel, linked together by a central stalk and a peripheral stalk. During catalysis, ATP synthesis in the catalytic domain of F(1) is coupled via a rotary mechanism of the central stalk subunits to proton translocation. In terms of biological role, component of the F(0) channel, it forms part of the peripheral stalk, linking F(1) to F(0). This chain is ATP synthase subunit b, chloroplastic, found in Physcomitrium patens (Spreading-leaved earth moss).